The primary structure comprises 732 residues: Wall-associated receptor kinase 2 (732 aa).

A signal peptide spans 1–23 (MKVQEGLFVVAVFYLAYTQLVKG). Residues 24 to 329 (QPRKECQTRC…RKVRPEYFRW (306 aa)) lie on the Extracellular side of the membrane. N-linked (GlcNAc...) asparagine glycosylation is found at Asn57, Asn75, Asn111, Asn154, Asn217, and Asn246. In terms of domain architecture, EGF-like 1 spans 230 to 277 (GDKTCKQVEYRGVCGGNSTCFDSTGGTGYNCKCLEGFEGNPYLPNGCQ). Intrachain disulfides connect Cys234–Cys249, Cys243–Cys260, Cys262–Cys276, Cys282–Cys295, Cys289–Cys304, and Cys306–Cys318. Residues 278 to 319 (DINECISSRHNCSEHSTCENTKGSFNCNCPSGYRKDSLNSCT) form the EGF-like 2; calcium-binding domain. A glycan (N-linked (GlcNAc...) asparagine) is linked at Asn288. A helical membrane pass occupies residues 330–350 (TQIFLGTTIGFSVIMLGISCL). Residues 351 to 732 (QQKIKHRKNT…VTTLDIEAGR (382 aa)) are Cytoplasmic-facing. Thr393 carries the phosphothreonine modification. The Protein kinase domain occupies 404 to 677 (YHESRILGQG…KEVAAELEAL (274 aa)). ATP is bound by residues 410 to 418 (LGQGGQGTV) and Lys432. A Phosphotyrosine modification is found at Tyr477. The active-site Proton acceptor is Asp529. Phosphothreonine occurs at positions 563 and 568. Tyr576 carries the phosphotyrosine modification.

The protein belongs to the protein kinase superfamily. Ser/Thr protein kinase family. As to expression, predominantly expressed in green tissues such as stems and leaves. Detected at organ junctions.

The protein localises to the membrane. The catalysed reaction is L-seryl-[protein] + ATP = O-phospho-L-seryl-[protein] + ADP + H(+). It carries out the reaction L-threonyl-[protein] + ATP = O-phospho-L-threonyl-[protein] + ADP + H(+). Functionally, serine/threonine-protein kinase that may function as a signaling receptor of extracellular matrix component. Binding to pectin may have significance in the control of cell expansion, morphogenesis and development. The polypeptide is Wall-associated receptor kinase 2 (WAK2) (Arabidopsis thaliana (Mouse-ear cress)).